Consider the following 1405-residue polypeptide: DNA-directed RNA polymerase subunit beta' (1405 aa).

Zn(2+) contacts are provided by C70, C72, C85, and C88. Mg(2+)-binding residues include D460, D462, and D464. Zn(2+)-binding residues include C814, C888, C895, and C898.

The protein belongs to the RNA polymerase beta' chain family. In terms of assembly, the RNAP catalytic core consists of 2 alpha, 1 beta, 1 beta' and 1 omega subunit. When a sigma factor is associated with the core the holoenzyme is formed, which can initiate transcription. Mg(2+) is required as a cofactor. Zn(2+) serves as cofactor.

The enzyme catalyses RNA(n) + a ribonucleoside 5'-triphosphate = RNA(n+1) + diphosphate. DNA-dependent RNA polymerase catalyzes the transcription of DNA into RNA using the four ribonucleoside triphosphates as substrates. The polypeptide is DNA-directed RNA polymerase subunit beta' (Shewanella sediminis (strain HAW-EB3)).